Here is a 328-residue protein sequence, read N- to C-terminus: Lateral signaling target 1 protein (328 aa).

Disordered stretches follow at residues S56–S78, P108–S135, and P177–G200. Polar residues predominate over residues V178 to G200.

As to quaternary structure, interacts with fbf-2; the interaction probably mediates the release of the C-terminal tail of fbf-2 from the RNA-binding domain, thereby altering its RNA-binding affinity.

Functionally, plays a role in germline stem cell maintenance, perhaps acting in concert with mRNA-binding factor fbf-2. May regulate fbf-2 by modulating RNA-binding and perhaps by competition with the intramolecular interaction between the fbf-2 RNA-binding domain and C-terminal tail. This is Lateral signaling target 1 protein from Caenorhabditis elegans.